The chain runs to 209 residues: Large ribosomal subunit protein uL3 (209 aa).

The tract at residues 141 to 163 (RAVGSMGASSDPSRTFKNKRMPG) is disordered.

The protein belongs to the universal ribosomal protein uL3 family. In terms of assembly, part of the 50S ribosomal subunit. Forms a cluster with proteins L14 and L19.

In terms of biological role, one of the primary rRNA binding proteins, it binds directly near the 3'-end of the 23S rRNA, where it nucleates assembly of the 50S subunit. This is Large ribosomal subunit protein uL3 from Clostridium botulinum (strain Kyoto / Type A2).